Here is a 570-residue protein sequence, read N- to C-terminus: Methionine--tRNA ligase (570 aa).

Positions 11–21 (PYVQTVPHLGN) match the 'HIGH' region motif. The Zn(2+) site is built by C143, C146, C156, and C159. The 'KMSKS' region signature appears at 333–337 (KFSKS). K336 contributes to the ATP binding site.

It belongs to the class-I aminoacyl-tRNA synthetase family. MetG type 1 subfamily. Requires Zn(2+) as cofactor.

Its subcellular location is the cytoplasm. It catalyses the reaction tRNA(Met) + L-methionine + ATP = L-methionyl-tRNA(Met) + AMP + diphosphate. Is required not only for elongation of protein synthesis but also for the initiation of all mRNA translation through initiator tRNA(fMet) aminoacylation. In Pyrobaculum calidifontis (strain DSM 21063 / JCM 11548 / VA1), this protein is Methionine--tRNA ligase.